The sequence spans 471 residues: Neuraminidase (471 aa).

Over 1-6 (MNPNQK) the chain is Intravirion. A helical membrane pass occupies residues 7–27 (LFALSGVAIALSVMNLLIGIS). The tract at residues 11–33 (SGVAIALSVMNLLIGISNVGLNV) is involved in apical transport and lipid raft association. Residues 28–471 (NVGLNVSLHL…PDGAQIQYFS (444 aa)) lie on the Virion surface side of the membrane. 7 N-linked (GlcNAc...) asparagine; by host glycosylation sites follow: Asn-32, Asn-47, Asn-56, Asn-57, Asn-67, Asn-68, and Asn-87. The hypervariable stalk region stretch occupies residues 36–87 (HLKEKGTKQEENLTCTTITQNNTTVVENTYVNNTTIITKEPDLKAPSYLLLN). The head of neuraminidase stretch occupies residues 90-471 (LCSVEGWVVI…PDGAQIQYFS (382 aa)). 8 disulfides stabilise this stretch: Cys-91-Cys-419, Cys-123-Cys-128, Cys-183-Cys-230, Cys-232-Cys-237, Cys-278-Cys-291, Cys-280-Cys-289, Cys-318-Cys-336, and Cys-423-Cys-450. Position 117 (Arg-117) interacts with substrate. N-linked (GlcNAc...) asparagine; by host glycosylation is present at Asn-145. Asp-150 functions as the Proton donor/acceptor in the catalytic mechanism. Arg-151 lines the substrate pocket. Asn-200 and Asn-234 each carry an N-linked (GlcNAc...) asparagine; by host glycan. Position 276 to 277 (276 to 277 (EE)) interacts with substrate. Substrate is bound at residue Arg-292. Residues Asp-293, Gly-297, and Asp-324 each contribute to the Ca(2+) site. Arg-371 is a substrate binding site. Asn-401 is a glycosylation site (N-linked (GlcNAc...) asparagine; by host). Tyr-405 functions as the Nucleophile in the catalytic mechanism.

Belongs to the glycosyl hydrolase 34 family. As to quaternary structure, homotetramer. It depends on Ca(2+) as a cofactor. In terms of processing, N-glycosylated.

It is found in the virion membrane. Its subcellular location is the host apical cell membrane. The catalysed reaction is Hydrolysis of alpha-(2-&gt;3)-, alpha-(2-&gt;6)-, alpha-(2-&gt;8)- glycosidic linkages of terminal sialic acid residues in oligosaccharides, glycoproteins, glycolipids, colominic acid and synthetic substrates.. With respect to regulation, inhibited by the neuraminidase inhibitors zanamivir (Relenza) and oseltamivir (Tamiflu). These drugs interfere with the release of progeny virus from infected cells and are effective against all influenza strains. Resistance to neuraminidase inhibitors is quite rare. In terms of biological role, catalyzes the removal of terminal sialic acid residues from viral and cellular glycoconjugates. Cleaves off the terminal sialic acids on the glycosylated HA during virus budding to facilitate virus release. Additionally helps virus spread through the circulation by further removing sialic acids from the cell surface. These cleavages prevent self-aggregation and ensure the efficient spread of the progeny virus from cell to cell. Otherwise, infection would be limited to one round of replication. Described as a receptor-destroying enzyme because it cleaves a terminal sialic acid from the cellular receptors. May facilitate viral invasion of the upper airways by cleaving the sialic acid moieties on the mucin of the airway epithelial cells. Likely to plays a role in the budding process through its association with lipid rafts during intracellular transport. May additionally display a raft-association independent effect on budding. Plays a role in the determination of host range restriction on replication and virulence. Sialidase activity in late endosome/lysosome traffic seems to enhance virus replication. This Influenza A virus (strain A/Duck/Germany/1949 H10N7) protein is Neuraminidase.